The sequence spans 478 residues: Cytochrome c-552 (478 aa).

The N-terminal stretch at 1–26 is a signal peptide; that stretch reads MARTILRARRFFSLILPFFFISSVYA. Heme c is bound at residue histidine 94. Heme contacts are provided by cysteine 122, cysteine 125, and lysine 126. The heme c site is built by cysteine 160, cysteine 163, histidine 164, cysteine 209, cysteine 212, and histidine 213. Ca(2+) contacts are provided by glutamate 215, tyrosine 216, lysine 261, and glutamine 263. Tyrosine 216 is a substrate binding site. Histidine 264 is a binding site for substrate. Residues histidine 275, cysteine 282, cysteine 285, histidine 286, histidine 301, cysteine 314, cysteine 317, histidine 318, and histidine 393 each coordinate heme c.

This sequence belongs to the cytochrome c-552 family. It depends on Ca(2+) as a cofactor. Heme c is required as a cofactor.

The protein resides in the periplasm. The enzyme catalyses 6 Fe(III)-[cytochrome c] + NH4(+) + 2 H2O = 6 Fe(II)-[cytochrome c] + nitrite + 8 H(+). Its pathway is nitrogen metabolism; nitrate reduction (assimilation). Catalyzes the reduction of nitrite to ammonia, consuming six electrons in the process. The chain is Cytochrome c-552 from Citrobacter koseri (strain ATCC BAA-895 / CDC 4225-83 / SGSC4696).